A 485-amino-acid chain; its full sequence is NADH-quinone oxidoreductase subunit N (485 aa).

The next 14 membrane-spanning stretches (helical) occupy residues 8–28 (LIAL…MLSI), 35–55 (FLNA…LWFV), 71–91 (GFAM…CTFA), 105–125 (FYLL…ANHL), 127–147 (SLFL…GYAF), 159–179 (YTIL…LVYA), 203–223 (LLAG…LVPF), 235–255 (PAPV…GVVM), 271–291 (VVLA…ALSQ), 297–317 (LLGY…IALQ), 326–346 (VGVY…VVSL), 373–393 (AAVM…LGFI), 408–430 (WWLV…RVAV), and 455–475 (IVVL…QPLI).

The protein belongs to the complex I subunit 2 family. As to quaternary structure, NDH-1 is composed of 13 different subunits. Subunits NuoA, H, J, K, L, M, N constitute the membrane sector of the complex.

It localises to the cell inner membrane. It carries out the reaction a quinone + NADH + 5 H(+)(in) = a quinol + NAD(+) + 4 H(+)(out). NDH-1 shuttles electrons from NADH, via FMN and iron-sulfur (Fe-S) centers, to quinones in the respiratory chain. The immediate electron acceptor for the enzyme in this species is believed to be ubiquinone. Couples the redox reaction to proton translocation (for every two electrons transferred, four hydrogen ions are translocated across the cytoplasmic membrane), and thus conserves the redox energy in a proton gradient. In Escherichia coli O1:K1 / APEC, this protein is NADH-quinone oxidoreductase subunit N.